Reading from the N-terminus, the 406-residue chain is Peptide antibiotic transporter SbmA (406 aa).

Residues 1–11 (MFKSFFPKPGT) lie on the Periplasmic side of the membrane. The helical transmembrane segment at 12–32 (FFLSAFVWALIAVIFWQAGGG) threads the bilayer. Over 33–56 (DWVARITGASGQIPISAARFWSLD) the chain is Cytoplasmic. Residues 57–77 (FLIFYAYYIVCVGLFALFWFI) traverse the membrane as a helical segment. At 78–87 (YSPHRWQYWS) the chain is on the periplasmic side. A helical membrane pass occupies residues 88–108 (ILGTALIIFVTWFLVEVGVAV). Topologically, residues 109-137 (NAWYAPFYDLIQTALSSPHKVTIEQFYRE) are cytoplasmic. The chain crosses the membrane as a helical span at residues 138–158 (VGVFLGIALIAVVISVLNNFF). Residues 159–205 (VSHYVFRWRTAMNEYYMANWQQLRHIEGAAQRVQEDTMRFASTLENM) are Periplasmic-facing. The chain crosses the membrane as a helical span at residues 206–226 (GVSFINAIMTLIAFLPVLVTL). Topologically, residues 227–242 (SAHVPELPIIGHIPYG) are cytoplasmic. Residues 243 to 263 (LVIAAIVWSLMGTGLLAVVGI) form a helical membrane-spanning segment. Over 264–331 (KLPGLEFKNQ…ARILYLQVDN (68 aa)) the chain is Periplasmic. The chain crosses the membrane as a helical span at residues 332 to 352 (VFGLFLLFPSIVAGTITLGLM). The Cytoplasmic segment spans residues 353-406 (TQITNVFGQVRGAFQYLINSWTTLVELMSIYKRLRSFEHELDGDKIQEVTHTLS).

The protein belongs to the peptide uptake permease (PUP) (TC 9.A.18) family.

Its subcellular location is the cell inner membrane. Functionally, uptake of antimicrobial peptides. This is Peptide antibiotic transporter SbmA (sbmA) from Escherichia coli O157:H7.